We begin with the raw amino-acid sequence, 514 residues long: Glutamate--cysteine ligase, chloroplastic (514 aa).

Residues 1-55 constitute a chloroplast transit peptide; sequence MALLSQAGGAYTVPSGHVSSRTGTKTVSGCVNVLRMKETYVSSYSRTLSTKSMLK. 2 cysteine pairs are disulfide-bonded: Cys178–Cys398 and Cys341–Cys356.

This sequence belongs to the carboxylate-amine ligase family. Glutamate--cysteine ligase type 2 subfamily. In terms of assembly, homodimer or monomer when oxidized or reduced, respectively. In terms of processing, the Cys-178-Cys-398 disulfide bridge is known to modulate the enzyme activity according to the redox status. The oxidized form constitutes the active enzyme.

Its subcellular location is the plastid. The protein resides in the chloroplast. The catalysed reaction is L-cysteine + L-glutamate + ATP = gamma-L-glutamyl-L-cysteine + ADP + phosphate + H(+). The protein operates within sulfur metabolism; glutathione biosynthesis; glutathione from L-cysteine and L-glutamate: step 1/2. Its function is as follows. Participates in the detoxification process. This is Glutamate--cysteine ligase, chloroplastic (GSH1) from Brassica juncea (Indian mustard).